The primary structure comprises 997 residues: Glutamate [NMDA] receptor subunit 1 (997 aa).

Positions 1-26 (MAVAGFVFCRPLFGLAIVLLVAPIDA) are cleaved as a signal peptide. Over 27–573 (AQRHTASDNP…TLVSFLQPFS (547 aa)) the chain is Extracellular. Residues asparagine 258, asparagine 314, asparagine 345, asparagine 397, asparagine 454, asparagine 481, and asparagine 501 are each glycosylated (N-linked (GlcNAc...) asparagine). Glycine-binding positions include 530–532 (PLT) and arginine 537. A helical membrane pass occupies residues 574–594 (NTLWILVMVSVHVVALVLYLL). Topologically, residues 595–651 (DRFSPFGRFKLSHSDSNEEKALNLSSAVWFAWGVLLNSGIGEGTPRSFSARVLGMVW) are cytoplasmic. A helical transmembrane segment spans residues 652–672 (AGFAMIIVASYTANLAAFLVL). The Extracellular segment spans residues 673-831 (ERPKTKLSGI…KTPNTLGLKN (159 aa)). An N-linked (GlcNAc...) asparagine glycan is attached at asparagine 693. Serine 703 and aspartate 747 together coordinate glycine. A helical transmembrane segment spans residues 832–852 (MAGVFILVGVGIAGGVGLIII). Over 853–997 (EVIYKKHQVK…YTSDVSHLVV (145 aa)) the chain is Cytoplasmic. Residues 970-997 (LGKTRPQQSVLPPRYSPGYTSDVSHLVV) are disordered. The segment covering 987–997 (GYTSDVSHLVV) has biased composition (polar residues).

The protein belongs to the glutamate-gated ion channel (TC 1.A.10.1) family. Forms a heteromeric NMDA channel with Nmdar2.

Its subcellular location is the cell membrane. It is found in the postsynaptic cell membrane. The protein localises to the postsynaptic density. Functionally, NMDA receptor subtype of glutamate-gated ion channels with high calcium permeability and voltage-dependent sensitivity to magnesium. Mediated by glycine. This protein plays a key role in synaptic plasticity, synaptogenesis, excitotoxicity, memory acquisition and learning. It mediates neuronal functions in glutamate neurotransmission. Is involved in the cell surface targeting of NMDA receptors. Plays a role in associative learning and in long-term memory consolidation. The sequence is that of Glutamate [NMDA] receptor subunit 1 from Drosophila sechellia (Fruit fly).